The primary structure comprises 316 residues: Large ribosomal subunit protein uL10 (316 aa).

The tract at residues 289-316 is disordered; it reads AAAAAPAKEAPKEESEESDEDMGFGLFD.

It belongs to the universal ribosomal protein uL10 family. In terms of assembly, P0 forms a pentameric complex by interaction with dimers of P1 and P2. In terms of processing, phosphorylated.

It localises to the nucleus. The protein resides in the cytoplasm. Its function is as follows. Ribosomal protein P0 is the functional equivalent of E.coli protein L10. This is Large ribosomal subunit protein uL10 (RPLP0) from Gallus gallus (Chicken).